Here is a 481-residue protein sequence, read N- to C-terminus: DKNTYKVSGGLHGVGVSCVNALSTVLHVTVHREGKIFEQEYHRGVPQYAVREIGATTDTGTTTHFKPDGEIFTETSYNREILAGRLRELAYLNRKIRITLTDEREKDEQGNVLSEPFYSEGGIMEFVQMLDRNGRRNSLLPAPIFIEAHDAPSNVAVEVSLQYNDSFSENIFSYVNNINTIEGGTHVAGFRRAITRVFKTYGDRNKLFEKSKIEVTGDDFREGLSAIVSVKVPEPQFEGQTKTKLGNSDVMGVVDSAVADVLNAYLEEHPKEARTVINKVVLAAQAREAARKARQLVQRKSVLTGSGLPGKLADCSENDPEKCELYLVEGDSAGGTAKQGRNRAFQAILPLRGKILNVEKAMEHKIYENEEIKNIFTALGVTIGTEEDDKALNLSKLRYHKLIIMTDADVDGSHIATLILTFVFRYMKALVEQGYVYIAQPPLYLVKKGKEQIYAWTEEQRKAAVATLAGGKEDSVTIQRY.

A Toprim domain is found at 323–442 (CELYLVEGDS…QGYVYIAQPP (120 aa)). Residues Glu-329, Asp-407, and Asp-409 each contribute to the Mg(2+) site.

Belongs to the type II topoisomerase GyrB family. In terms of assembly, heterotetramer, composed of two GyrA and two GyrB chains. In the heterotetramer, GyrA contains the active site tyrosine that forms a transient covalent intermediate with DNA, while GyrB binds cofactors and catalyzes ATP hydrolysis. Mg(2+) is required as a cofactor. Requires Mn(2+) as cofactor. The cofactor is Ca(2+).

It localises to the cytoplasm. The catalysed reaction is ATP-dependent breakage, passage and rejoining of double-stranded DNA.. Functionally, a type II topoisomerase that negatively supercoils closed circular double-stranded (ds) DNA in an ATP-dependent manner to modulate DNA topology and maintain chromosomes in an underwound state. Negative supercoiling favors strand separation, and DNA replication, transcription, recombination and repair, all of which involve strand separation. Also able to catalyze the interconversion of other topological isomers of dsDNA rings, including catenanes and knotted rings. Type II topoisomerases break and join 2 DNA strands simultaneously in an ATP-dependent manner. In Chitinophaga japonensis (Flexibacter japonensis), this protein is DNA gyrase subunit B (gyrB).